The primary structure comprises 138 residues: ATP synthase epsilon chain (138 aa).

It belongs to the ATPase epsilon chain family. F-type ATPases have 2 components, CF(1) - the catalytic core - and CF(0) - the membrane proton channel. CF(1) has five subunits: alpha(3), beta(3), gamma(1), delta(1), epsilon(1). CF(0) has three main subunits: a, b and c.

The protein resides in the cell inner membrane. In terms of biological role, produces ATP from ADP in the presence of a proton gradient across the membrane. In Vesicomyosocius okutanii subsp. Calyptogena okutanii (strain HA), this protein is ATP synthase epsilon chain.